We begin with the raw amino-acid sequence, 611 residues long: Protein Spindly (611 aa).

A coiled-coil region spans residues 1–288 (MEESETVLKL…QFQSLQKQHA (288 aa)). Residues 499–511 (LKEDSSLSTKEQD) are compositionally biased toward basic and acidic residues. Positions 499 to 611 (LKEDSSLSTK…PAATTQCPQQ (113 aa)) are disordered. The segment covering 549-567 (RNTNNCSVTSTSPRSASEE) has biased composition (polar residues). Residues 570–583 (SESKRFDEEQEKRK) are compositionally biased toward basic and acidic residues.

It belongs to the Spindly family.

It localises to the chromosome. The protein localises to the centromere. The protein resides in the kinetochore. Required for the localization of dynein and dynactin to the mitotic kintochore. Dynein is believed to control the initial lateral interaction between the kinetochore and spindle microtubules and to facilitate the subsequent formation of end-on kinetochore-microtubule attachments mediated by the NDC80 complex. May act as an adapter protein linking the dynein motor complex to various cargos. This chain is Protein Spindly (spdl1), found in Xenopus tropicalis (Western clawed frog).